Here is a 289-residue protein sequence, read N- to C-terminus: UPF0276 protein BPP1075 (289 aa).

Belongs to the UPF0276 family.

This is UPF0276 protein BPP1075 from Bordetella parapertussis (strain 12822 / ATCC BAA-587 / NCTC 13253).